A 414-amino-acid chain; its full sequence is MKNKYYPVRTSMDEMNAKNDNEIDLEKGPLPEYNSEDGSTLPPYSENLNLKDPKQMGANNPNLFNTDESTTPPDYGEDSLSNTHRENHSSGTADNSSPFLIKLLISFIPIFVLNVPAVCYLTYKDALFKDYGKDEWVYFGVWCAICLMIFISLWCFYETWTQAVAQCVKVTVIFLAQCIKVTVISLAQCVKVTAIFLAQCIKVTVISLAQCVKVTAIFLAKCVKVTVISLAKCVKVISIGLFNIRREMMIIIWILWLIICCILFGCVKDGRLNFNKALICSTCTISAVLFLIVSSVCIPIWTLWRALSGMLQVLGIHGIIAVLVNGLMSLFGKHFGWRGYEIEGFVLFFTSSALFLYEMERPGVLKRLRNTTGNVIGYICGGIEDAFRRIKNAFRGANDNNNIPLGEMDVEGEV.

A disordered region spans residues 1–94 (MKNKYYPVRT…RENHSSGTAD (94 aa)). Residues 11–29 (SMDEMNAKNDNEIDLEKGP) are compositionally biased toward basic and acidic residues. Positions 57 to 72 (GANNPNLFNTDESTTP) are enriched in polar residues. Helical transmembrane passes span 99 to 119 (FLIK…PAVC), 136 to 156 (WVYF…LWCF), 170 to 190 (VTVI…AQCV), 192 to 212 (VTAI…AQCV), 222 to 242 (CVKV…IGLF), 247 to 267 (EMMI…FGCV), 284 to 304 (TISA…WTLW), 311 to 331 (LQVL…MSLF), and 339 to 359 (GYEI…LYEM).

The protein belongs to the WTF family. As to quaternary structure, homomer. Forms protein aggregates. The two isoforms can interact with each other and with themselves. High sequence similarity is required for their interaction.

Its subcellular location is the spore membrane. It localises to the vacuole membrane. It is found in the ascus epiplasm. The protein localises to the cytoplasm. The protein resides in the endoplasmic reticulum membrane. In terms of biological role, promotes unequal transmission of alleles from the parental zygote to progeny spores by acting as poison/antidote system where the poison and antidote proteins are produced from the same locus; the poison component is trans-acting and targets all spores within an ascus whereas the antidote component is spore-specific, leading to poisoning of all progeny that do not inherit the allele. Its function is as follows. Localizes isoform 2 to the vacuole thereby facilitating its degradation. Forms toxic aggregates that disrupt spore maturation. This chain is Meiotic driver wtf19, found in Schizosaccharomyces kambucha (Fission yeast).